The sequence spans 349 residues: Sphingolipid C4-hydroxylase SUR2 (349 aa).

5 helical membrane passes run 9 to 29 (AAGSFPLAFGLKTSFGFMHYA), 50 to 70 (VLALVAPVVAYWALSGIFHVI), 99 to 119 (FLEVILQHIIQTIVGLIFMHF), 148 to 168 (IYYGYMYGMSALKIFAGFLFV), and 209 to 229 (PVEGFLLDTLGTGIAMTLTHL). Residues 162-297 (FAGFLFVDTW…FTFWDNLFQT (136 aa)) enclose the Fatty acid hydroxylase domain.

This sequence belongs to the sterol desaturase family.

The protein localises to the endoplasmic reticulum membrane. It carries out the reaction sphinganine + 2 Fe(II)-[cytochrome b5] + O2 + 2 H(+) = (4R)-hydroxysphinganine + 2 Fe(III)-[cytochrome b5] + H2O. The enzyme catalyses an N-acylsphinganine + 2 Fe(II)-[cytochrome b5] + O2 + 2 H(+) = an N-acyl-(4R)-4-hydroxysphinganine + 2 Fe(III)-[cytochrome b5] + H2O. It catalyses the reaction an N-acyleicosasphinganine + 2 Fe(II)-[cytochrome b5] + O2 + 2 H(+) = N-acyl-4-hydroxyeicosasphinganine + 2 Fe(III)-[cytochrome b5] + H2O. It functions in the pathway membrane lipid metabolism; sphingolipid biosynthesis. Its function is as follows. Required for hydroxylation of C-4 in the sphingoid moiety of ceramide. Catalyzes the conversion of sphinganine to phytosphingosine in sphingolipid biosynthesis. Involved in the response to syringomycin. The protein is Sphingolipid C4-hydroxylase SUR2 (SUR2) of Saccharomyces cerevisiae (strain ATCC 204508 / S288c) (Baker's yeast).